The following is a 305-amino-acid chain: MNMSNMAIDLVGVRKSFGDKVIVNDLSFSVARGECFGLLGPNGAGKSTIARMLLGMIWPDRGKITVLDEPVPSRARARRGVGVVPQFDNLEPEFTVRENLLVFGRYFGMSARTIEAVVPSLLEFARLESKADVRVSLLGGGMKRRLTLARALINDPHLLVMDEPTTGLDPHARHLIWERLRALLARGKTILLTTHFMEEAERLCDPLCVLESGCKIAEGEPDALIDEHIGCNVIEIYGGDLDQLRELIRPYARHIEVSGETLFCYARCPDEISVHLRGRTGLRVLQRPPNLEDVFLRLTGREMEK.

The ABC transporter domain occupies 8–237; the sequence is IDLVGVRKSF…HIGCNVIEIY (230 aa). 40 to 47 is an ATP binding site; that stretch reads GPNGAGKS.

This sequence belongs to the ABC transporter superfamily. Lipooligosaccharide exporter (TC 3.A.1.102) family. As to quaternary structure, the complex is composed of two ATP-binding proteins (NodI) and two transmembrane proteins (NodJ).

It is found in the cell inner membrane. In terms of biological role, part of the ABC transporter complex NodIJ involved in the export of the nodulation factors (Nod factors), the bacterial signal molecules that induce symbiosis and subsequent nodulation induction. Nod factors are LCO (lipo-chitin oligosaccharide), a modified beta-1,4-linked N-acetylglucosamine oligosaccharide. This subunit is responsible for energy coupling to the transport system. This chain is Nod factor export ATP-binding protein I, found in Bradyrhizobium sp. (strain SNU001).